We begin with the raw amino-acid sequence, 286 residues long: Divergent deoxyribose-phosphate aldolase-like protein (286 aa).

Homodimer. Interacts with ADF; the interaction enhances ADF activity in disassembly of filamentous actin and inhibition of actin polymerization.

Its subcellular location is the cytoplasm. In terms of biological role, involved in regulation of actin dynamics. The sequence is that of Divergent deoxyribose-phosphate aldolase-like protein from Toxoplasma gondii.